We begin with the raw amino-acid sequence, 365 residues long: Galactoside alpha-(1,2)-fucosyltransferase 1 (365 aa).

At 1–8 (MWVPSRRH) the chain is on the cytoplasmic side. A helical; Signal-anchor for type II membrane protein membrane pass occupies residues 9 to 28 (LCLTFLLVCVLAAIFFLNVY). The Lumenal portion of the chain corresponds to 29-365 (QDLFYSGLDL…LSPLQMLAGP (337 aa)). N-linked (GlcNAc...) asparagine glycosylation is found at N65, N301, and N327.

Belongs to the glycosyltransferase 11 family.

The protein localises to the golgi apparatus. It localises to the golgi stack membrane. It catalyses the reaction a beta-D-galactosyl-(1-&gt;4)-N-acetyl-beta-D-glucosaminyl derivative + GDP-beta-L-fucose = an alpha-L-Fuc-(1-&gt;2)-beta-D-Gal-(1-&gt;4)-beta-D-GlcNAc derivative + GDP + H(+). It carries out the reaction a ganglioside GA1 + GDP-beta-L-fucose = a ganglioside Fuc-GA1 + GDP + H(+). The enzyme catalyses a beta-D-Gal-(1-&gt;3)-beta-D-GlcNAc-(1-&gt;3)-beta-D-Gal-(1-&gt;4)-beta-D-Glc-(1&lt;-&gt;1')-Cer(d18:1(4E)) + GDP-beta-L-fucose = alpha-L-fucosyl-(1-&gt;2)- beta-D-galactosyl-(1-&gt;3)-N-acetyl-beta-D-glucosaminyl-(1-&gt;3)-beta-D-galactosyl-(1-&gt;4)-beta-D-glucosyl-(1&lt;-&gt;1')-N-acylsphing-4-enine + GDP + H(+). The catalysed reaction is a neolactoside nLc4Cer(d18:1(4E)) + GDP-beta-L-fucose = a neolactoside IV(2)-alpha-Fuc-nLc4Cer(d18:1(4E)) + GDP + H(+). It catalyses the reaction a ganglioside GM1 + GDP-beta-L-fucose = a ganglioside Fuc-GM1 + GDP + H(+). It carries out the reaction beta-D-galactosyl-(1-&gt;3)-N-acetyl-D-galactosamine + GDP-beta-L-fucose = alpha-L-fucosyl-(1-&gt;2)-beta-D-galactosyl-(1-&gt;3)-N-acetyl-D-galactosamine + GDP + H(+). Its pathway is protein modification; protein glycosylation. Functionally, catalyzes the transfer of L-fucose, from a guanosine diphosphate-beta-L-fucose, to the terminal galactose residue of glycoconjugates through an alpha(1,2) linkage leading to H antigen synthesis that is an intermediate substrate in the synthesis of ABO blood group antigens. H antigen is essential for maturation of the glomerular layer of the main olfactory bulb, in cell migration and early cell-cell contacts during tumor associated angiogenesis. Preferentially fucosylates soluble lactose and to a lesser extent fucosylates glycolipids gangliosides GA1 and GM1a. This Sus scrofa (Pig) protein is Galactoside alpha-(1,2)-fucosyltransferase 1.